Here is a 70-residue protein sequence, read N- to C-terminus: Probable ferredoxin TA0517 (70 aa).

4Fe-4S ferredoxin-type domains follow at residues 8–36 (TEMD…WLDE) and 37–66 (TVIK…AEWF). 8 residues coordinate [4Fe-4S] cluster: Cys17, Cys20, Cys23, Cys27, Cys46, Cys49, Cys52, and Cys56.

It depends on [4Fe-4S] cluster as a cofactor.

In terms of biological role, ferredoxins are iron-sulfur proteins that transfer electrons in a wide variety of metabolic reactions. This Thermoplasma acidophilum (strain ATCC 25905 / DSM 1728 / JCM 9062 / NBRC 15155 / AMRC-C165) protein is Probable ferredoxin TA0517.